The primary structure comprises 121 residues: Large ribosomal subunit protein bL20 (121 aa).

Belongs to the bacterial ribosomal protein bL20 family.

Binds directly to 23S ribosomal RNA and is necessary for the in vitro assembly process of the 50S ribosomal subunit. It is not involved in the protein synthesizing functions of that subunit. This Wolbachia sp. subsp. Drosophila simulans (strain wRi) protein is Large ribosomal subunit protein bL20.